Reading from the N-terminus, the 97-residue chain is MTASLTTDSVADSIYQNILTSIIQDIISRQTVKRKLLKLQFPDAKPYYADPSGTLDIHGKAKQADSAVYIECNVCGREVSGNRFAAHLVRCLSRGRR.

Residues 70–91 (IECNVCGREVSGNRFAAHLVRC) form an SGF11-type zinc finger.

This sequence belongs to the SGF11 family. As to quaternary structure, component of the 1.8 MDa SAGA transcription coactivator-HAT complex. SAGA is built of 5 distinct domains with specialized functions. Within the SAGA complex, SUS1, SGF11, SGF73 and UBP8 form an additional subcomplex of SAGA called the DUB module (deubiquitination module). Interacts directly with SGF73, SUS1 and UBP8.

The protein localises to the nucleus. Functions as a component of the transcription regulatory histone acetylation (HAT) complex SAGA. At the promoters, SAGA is required for recruitment of the basal transcription machinery. It influences RNA polymerase II transcriptional activity through different activities such as TBP interaction and promoter selectivity, interaction with transcription activators, and chromatin modification through histone acetylation and deubiquitination. SAGA acetylates nucleosomal histone H3 to some extent (to form H3K9ac, H3K14ac, H3K18ac and H3K23ac). SAGA interacts with DNA via upstream activating sequences (UASs). Involved in transcriptional regulation of a subset of SAGA-regulated genes. Within the SAGA complex, participates in a subcomplex, that specifically deubiquitinates histones H2B. This chain is SAGA-associated factor 11, found in Kluyveromyces lactis (strain ATCC 8585 / CBS 2359 / DSM 70799 / NBRC 1267 / NRRL Y-1140 / WM37) (Yeast).